A 538-amino-acid chain; its full sequence is Cytosolic Fe-S cluster assembly factor NAR1 homolog (538 aa).

Residues Cys-19, Cys-64, Cys-67, Cys-70, Cys-218, Cys-273, Cys-453, and Cys-457 each coordinate [4Fe-4S] cluster.

The protein belongs to the NARF family.

Its subcellular location is the cytoplasm. The protein localises to the nucleus. Its function is as follows. Component of the cytosolic Fe/S protein assembly machinery. Required for maturation of extramitochondrial Fe/S proteins. May play a role in the transfer of pre-assembled Fe/S clusters to target apoproteins. The sequence is that of Cytosolic Fe-S cluster assembly factor NAR1 homolog from Schizosaccharomyces pombe (strain 972 / ATCC 24843) (Fission yeast).